Consider the following 310-residue polypeptide: GMP synthase [glutamine-hydrolyzing] subunit B (310 aa).

The GMPS ATP-PPase domain occupies 1–187 (MSTSSYIDQI…LGLRTDLQPF (187 aa)). 27 to 33 (SGGQDSS) contacts ATP.

In terms of assembly, heterodimer composed of a glutamine amidotransferase subunit (A) and a GMP-binding subunit (B).

The catalysed reaction is XMP + L-glutamine + ATP + H2O = GMP + L-glutamate + AMP + diphosphate + 2 H(+). It participates in purine metabolism; GMP biosynthesis; GMP from XMP (L-Gln route): step 1/1. Catalyzes the synthesis of GMP from XMP. This Thermoplasma acidophilum (strain ATCC 25905 / DSM 1728 / JCM 9062 / NBRC 15155 / AMRC-C165) protein is GMP synthase [glutamine-hydrolyzing] subunit B (guaAB).